We begin with the raw amino-acid sequence, 341 residues long: tRNA N6-adenosine threonylcarbamoyltransferase (341 aa).

Residues His111 and His115 each coordinate Fe cation. Residues 134–138, Asp167, Gly180, and Asn276 each bind substrate; that span reads LVSGG. A Fe cation-binding site is contributed by Asp304.

This sequence belongs to the KAE1 / TsaD family. Requires Fe(2+) as cofactor.

The protein resides in the cytoplasm. The catalysed reaction is L-threonylcarbamoyladenylate + adenosine(37) in tRNA = N(6)-L-threonylcarbamoyladenosine(37) in tRNA + AMP + H(+). In terms of biological role, required for the formation of a threonylcarbamoyl group on adenosine at position 37 (t(6)A37) in tRNAs that read codons beginning with adenine. Is involved in the transfer of the threonylcarbamoyl moiety of threonylcarbamoyl-AMP (TC-AMP) to the N6 group of A37, together with TsaE and TsaB. TsaD likely plays a direct catalytic role in this reaction. This Pseudomonas fluorescens (strain ATCC BAA-477 / NRRL B-23932 / Pf-5) protein is tRNA N6-adenosine threonylcarbamoyltransferase.